The primary structure comprises 266 residues: NADP-dependent mannitol dehydrogenase (266 aa).

NADP(+) is bound by residues threonine 31, isoleucine 33, asparagine 107, and arginine 140. Serine 159 (proton donor) is an active-site residue. 4 residues coordinate NADP(+): tyrosine 174, lysine 178, isoleucine 206, and threonine 208. Tyrosine 174 (proton acceptor) is an active-site residue. Catalysis depends on lysine 178, which acts as the Lowers pKa of active site Tyr.

This sequence belongs to the short-chain dehydrogenases/reductases (SDR) family. As to quaternary structure, homotetramer.

Its subcellular location is the vacuole. The catalysed reaction is D-mannitol + NADP(+) = D-fructose + NADPH + H(+). The chain is NADP-dependent mannitol dehydrogenase from Alternaria alternata (Alternaria rot fungus).